We begin with the raw amino-acid sequence, 1090 residues long: Neurofilament heavy polypeptide (1090 aa).

The head stretch occupies residues 2–98; it reads MSFGSADALL…AVAARSEKEQ (97 aa). Phosphoserine occurs at positions 74 and 122. The IF rod domain maps to 95–411; sequence EKEQLQALND…KLLEGEECRI (317 aa). The segment at 99 to 130 is coil 1A; sequence LQALNDRFAGYIDKVRQLEAHNRSLEGEAAAL. Residues 131-143 form a linker 1 region; it reads RQQQAGRAAMGEL. Positions 144–242 are coil 1B; it reads YEREVREMRG…QEEVGELLGQ (99 aa). A linker 12 region spans residues 243 to 264; it reads IQGCGAAQAQAQAEARDALKCD. Residues 265 to 286 form a coil 2A region; it reads VTSALREIRAQLEGHAVQSTLQ. Positions 287–290 are linker 2; it reads SEEW. Residues 291-411 form a coil 2B region; the sequence is FRVRLDRLSE…KLLEGEECRI (121 aa). 3 positions are modified to phosphoserine: S345, S416, and S419. Residues 412 to 1090 are tail; that stretch reads GFGPSPFSLT…TEDKATKGEK (679 aa). The interval 456-1090 is disordered; it reads EGQTEEIRVT…TEDKATKGEK (635 aa). The segment covering 468–495 has biased composition (acidic residues); sequence VTEEEDKEAQGQEGEEAEEGEEKEEEEG. Positions 496–506 are enriched in low complexity; it reads AAATSPPAEEA. A phosphoserine mark is found at S508, S523, S529, S535, S541, S547, S553, S559, S565, S571, S577, S583, S589, S595, S601, S607, S613, S619, S625, S631, S637, S643, S649, S655, S661, S667, S673, S679, S685, S691, S697, S703, S709, S715, S721, S727, S733, S739, S745, S751, S757, S763, and S769. Residues 508-579 are compositionally biased toward basic and acidic residues; that stretch reads SPEKETKSRV…KSPAEAKSPA (72 aa). Repeat copies occupy residues 522-527, 528-533, 534-539, 540-545, 546-551, 552-557, 558-563, 564-569, 570-575, 576-581, 582-587, 588-593, 594-599, 600-605, 606-611, 612-617, 618-623, 624-629, 630-635, 636-641, 642-647, 648-653, 654-659, 660-665, 666-671, 672-677, 678-683, 684-689, 690-695, 696-701, 702-707, 708-713, 714-719, 720-725, 726-731, 732-737, 738-743, 744-749, 750-755, 756-761, 762-767, and 768-773. The segment at 522 to 892 is 52 X 6 AA approximate tandem repeats of K-S-P-[AGISV]-[EATK]-[APVQ]; the sequence is KSPGEAKSPG…KEEVKSPVKE (371 aa). Residues 595 to 633 show a composition bias toward basic and acidic residues; it reads SPSEAKSPAEAKSPAEAKSPAEAKSPAEAKSPAEAKSPA. Residues 649–717 show a composition bias toward basic and acidic residues; that stretch reads SPSEAKSPAE…KSPAEVKSPG (69 aa). Residues 745-781 are compositionally biased toward basic and acidic residues; the sequence is SPGEAKSPAEAKSPAEAKSPIEVKSPEKAKTPVKEGA. One copy of the 43; approximate repeat lies at 774–779; sequence KTPVKE. 6 consecutive repeat copies span residues 782–787, 788–793, 794–799, 808–813, 814–819, and 833–838. A phosphoserine mark is found at S783, S789, S795, S809, S815, and S834. A compositionally biased stretch (basic and acidic residues) spans 788–834; the sequence is KSPEKAKSPVKEDIKPPAEAKSPEKAKSPVKEGAKPPEKAKPLDVKS. T839 carries the post-translational modification Phosphothreonine. Composition is skewed to basic and acidic residues over residues 843 to 964 and 974 to 1090; these read EEAK…KAVA and GVKE…KGEK. Tandem repeats lie at residues 858–863, 866–871, and 887–892. Residues S859, S867, S888, and S947 each carry the phosphoserine modification.

Belongs to the intermediate filament family. Forms heterodimers with NEFL; which can further hetero-oligomerize (in vitro). Forms heterodimers with INA (in vitro). In terms of processing, there are a number of repeats of the tripeptide K-S-P, NFH is phosphorylated on a number of the serines in this motif. It is thought that phosphorylation of NFH results in the formation of interfilament cross bridges that are important in the maintenance of axonal caliber. Post-translationally, phosphorylation seems to play a major role in the functioning of the larger neurofilament polypeptides (NF-M and NF-H), the levels of phosphorylation being altered developmentally and coincidentally with a change in the neurofilament function. Phosphorylated in the head and rod regions by the PKC kinase PKN1, leading to the inhibition of polymerization. In terms of tissue distribution, expressed in the sciatic nerve (at protein level).

It localises to the cytoplasm. The protein localises to the cytoskeleton. It is found in the cell projection. The protein resides in the axon. In terms of biological role, neurofilaments usually contain three intermediate filament proteins: NEFL, NEFM, and NEFH which are involved in the maintenance of neuronal caliber. NEFH has an important function in mature axons that is not subserved by the two smaller NF proteins. May additionally cooperate with the neuronal intermediate filament proteins PRPH and INA to form neuronal filamentous networks. The sequence is that of Neurofilament heavy polypeptide (Nefh) from Mus musculus (Mouse).